Here is a 278-residue protein sequence, read N- to C-terminus: Large ribosomal subunit protein uL2 (278 aa).

Disordered regions lie at residues 26–57 and 225–278; these read RSTP…QGGG and VMNP…NKKR. Basic residues predominate over residues 258–278; the sequence is RSPKKASNKYIVRRRKTNKKR.

It belongs to the universal ribosomal protein uL2 family. In terms of assembly, part of the 50S ribosomal subunit. Forms a bridge to the 30S subunit in the 70S ribosome.

Functionally, one of the primary rRNA binding proteins. Required for association of the 30S and 50S subunits to form the 70S ribosome, for tRNA binding and peptide bond formation. It has been suggested to have peptidyltransferase activity; this is somewhat controversial. Makes several contacts with the 16S rRNA in the 70S ribosome. The polypeptide is Large ribosomal subunit protein uL2 (Streptomyces coelicolor (strain ATCC BAA-471 / A3(2) / M145)).